The primary structure comprises 129 residues: Protachykinin-1 (129 aa).

Positions 1 to 19 (MKILVALAVFFLVSTQLFA) are cleaved as a signal peptide. Residues 20–56 (EEIGANDDLNYWSDWYDSDQIKEELPEPFEHLLQRIA) constitute a propeptide that is removed on maturation. 2 positions are modified to methionine amide: Met-68 and Met-107.

It belongs to the tachykinin family. Post-translationally, the substance P form is cleaved at Pro-59 by the prolyl endopeptidase FAP (seprase) activity (in vitro). Substance P is also cleaved and degraded by Angiotensin-converting enzyme (ACE) and neprilysin (MME).

Its subcellular location is the secreted. Functionally, tachykinins are active peptides which excite neurons, evoke behavioral responses, are potent vasodilators and secretagogues, and contract (directly or indirectly) many smooth muscles. The chain is Protachykinin-1 (TAC1) from Homo sapiens (Human).